The following is a 534-amino-acid chain: NAD(P)H-quinone oxidoreductase chain 4 2 (534 aa).

Transmembrane regions (helical) follow at residues 9-29, 51-71, 106-126, 130-150, 152-172, 184-204, 227-247, 258-278, 290-310, 326-346, 347-367, 399-419, 432-452, and 479-499; these read FPWLTTVIAYPVLAALFIPLI, WFALFIAVTDLLILLAGFYVG, LILLTAFITTLAILAAWPVTL, LFYFLMLAMYGGQIGVFAVQD, LLFFLMWELELIPVYLLLSIW, FILYTALSSLFILVAGLAMAF, LLMYGAFLIAYGVKLPIFPLH, TAPVHMLLAGILLKMGGYALM, LYFAPVLIVLGVVNIIFAALT, ISHMGFVLIGIGSLTEIGMSG, AMLQMISHGLIGASLFFLVGA, LASLALPGMSGFVAEIMVFIG, LVVVFLAAVGVILTPIYLLSM, and VFIIACLLIPIIGIGLYPKLV.

It belongs to the complex I subunit 4 family.

The protein localises to the cellular thylakoid membrane. The catalysed reaction is a plastoquinone + NADH + (n+1) H(+)(in) = a plastoquinol + NAD(+) + n H(+)(out). It catalyses the reaction a plastoquinone + NADPH + (n+1) H(+)(in) = a plastoquinol + NADP(+) + n H(+)(out). In terms of biological role, NDH-1 shuttles electrons from NAD(P)H, via FMN and iron-sulfur (Fe-S) centers, to quinones in the respiratory chain. The immediate electron acceptor for the enzyme in this species is believed to be plastoquinone. Couples the redox reaction to proton translocation (for every two electrons transferred, four hydrogen ions are translocated across the cytoplasmic membrane), and thus conserves the redox energy in a proton gradient. The chain is NAD(P)H-quinone oxidoreductase chain 4 2 from Synechococcus sp. (strain JA-2-3B'a(2-13)) (Cyanobacteria bacterium Yellowstone B-Prime).